Reading from the N-terminus, the 313-residue chain is MPKSTIRIATRQSPLAMWQALYVKEQLQIAHPSLVVELVPMVTKGDIILDTPLAKVGGKGLFVKELELALLSSRADIAVHSMKDVPIDFPEGLGLVTICEREDPRDAFVSNHYDSLEQLPAGSVVGTSSLRRQCQLKALRPDLIIRDLRGNVGTRLSKLDNGDYDAIILAVAGLKRLKLTERIRSSLSAEQSLPAVGQGAVGIECRLDDHDTQALLAALNHADTATCVKAERAMNTRLEGGCQVPIGSYAIWQNDKIWLRALVGAPDGKTILRGERLVSPEDAEQAGISLAEELLDKGAREILTAVYQGNTAI.

Cys242 bears the S-(dipyrrolylmethanemethyl)cysteine mark.

Belongs to the HMBS family. Monomer. Dipyrromethane is required as a cofactor.

The catalysed reaction is 4 porphobilinogen + H2O = hydroxymethylbilane + 4 NH4(+). The protein operates within porphyrin-containing compound metabolism; protoporphyrin-IX biosynthesis; coproporphyrinogen-III from 5-aminolevulinate: step 2/4. In terms of biological role, tetrapolymerization of the monopyrrole PBG into the hydroxymethylbilane pre-uroporphyrinogen in several discrete steps. This chain is Porphobilinogen deaminase (hemC), found in Proteus mirabilis.